The following is a 307-amino-acid chain: Phospho-N-acetylmuramoyl-pentapeptide-transferase (307 aa).

10 helical membrane-spanning segments follow: residues 3–23 (IILF…KYWI), 47–67 (SGTP…FLFF), 71–91 (FFPS…DFKL), 105–125 (IFLS…DYKI), 137–157 (IFYV…INLT), 162–182 (GLAG…NFQF), 186–206 (LTLE…FNSH), 210–230 (IFMG…LSII), 237–257 (LVFL…QVFF), and 285–305 (VVWR…ILWN).

The protein belongs to the glycosyltransferase 4 family. MraY subfamily. Requires Mg(2+) as cofactor.

It is found in the cell inner membrane. It catalyses the reaction UDP-N-acetyl-alpha-D-muramoyl-L-alanyl-gamma-D-glutamyl-meso-2,6-diaminopimeloyl-D-alanyl-D-alanine + di-trans,octa-cis-undecaprenyl phosphate = di-trans,octa-cis-undecaprenyl diphospho-N-acetyl-alpha-D-muramoyl-L-alanyl-D-glutamyl-meso-2,6-diaminopimeloyl-D-alanyl-D-alanine + UMP. It functions in the pathway cell wall biogenesis; peptidoglycan biosynthesis. Catalyzes the initial step of the lipid cycle reactions in the biosynthesis of the cell wall peptidoglycan: transfers peptidoglycan precursor phospho-MurNAc-pentapeptide from UDP-MurNAc-pentapeptide onto the lipid carrier undecaprenyl phosphate, yielding undecaprenyl-pyrophosphoryl-MurNAc-pentapeptide, known as lipid I. This Dictyoglomus turgidum (strain DSM 6724 / Z-1310) protein is Phospho-N-acetylmuramoyl-pentapeptide-transferase.